A 148-amino-acid chain; its full sequence is MKSVGVFALIISFSIVAESKIYTRCKLAKIFAKAGLDNYGGFALGNWLCMAYYESHYNTTAENVLEDGSTDYGIFQINSFTWCRNARKHQKNHCHVACSALITDDLTDAILCAKKIVKETQGMNYWQGWKKNCENKDMSEWKRGCEVS.

A signal peptide spans 1 to 19 (MKSVGVFALIISFSIVAES). A C-type lysozyme domain is found at 20–148 (KIYTRCKLAK…SEWKRGCEVS (129 aa)). 4 disulfides stabilise this stretch: cysteine 25–cysteine 145, cysteine 49–cysteine 133, cysteine 83–cysteine 98, and cysteine 94–cysteine 112. Glutamate 54 is a catalytic residue. Asparagine 58 carries an N-linked (GlcNAc...) asparagine glycan. Aspartate 71 is an active-site residue.

The protein belongs to the glycosyl hydrolase 22 family. Monomer.

The protein resides in the secreted. The enzyme catalyses Hydrolysis of (1-&gt;4)-beta-linkages between N-acetylmuramic acid and N-acetyl-D-glucosamine residues in a peptidoglycan and between N-acetyl-D-glucosamine residues in chitodextrins.. This is Lysozyme-like protein 1 (Lyzl1) from Mus musculus (Mouse).